The following is a 363-amino-acid chain: UDP-N-acetylglucosamine--N-acetylmuramyl-(pentapeptide) pyrophosphoryl-undecaprenol N-acetylglucosamine transferase (363 aa).

UDP-N-acetyl-alpha-D-glucosamine is bound by residues 10-12 (TGG), asparagine 124, serine 195, isoleucine 250, and glutamine 295.

Belongs to the glycosyltransferase 28 family. MurG subfamily.

It is found in the cell membrane. It carries out the reaction di-trans,octa-cis-undecaprenyl diphospho-N-acetyl-alpha-D-muramoyl-L-alanyl-D-glutamyl-meso-2,6-diaminopimeloyl-D-alanyl-D-alanine + UDP-N-acetyl-alpha-D-glucosamine = di-trans,octa-cis-undecaprenyl diphospho-[N-acetyl-alpha-D-glucosaminyl-(1-&gt;4)]-N-acetyl-alpha-D-muramoyl-L-alanyl-D-glutamyl-meso-2,6-diaminopimeloyl-D-alanyl-D-alanine + UDP + H(+). Its pathway is cell wall biogenesis; peptidoglycan biosynthesis. In terms of biological role, cell wall formation. Catalyzes the transfer of a GlcNAc subunit on undecaprenyl-pyrophosphoryl-MurNAc-pentapeptide (lipid intermediate I) to form undecaprenyl-pyrophosphoryl-MurNAc-(pentapeptide)GlcNAc (lipid intermediate II). This chain is UDP-N-acetylglucosamine--N-acetylmuramyl-(pentapeptide) pyrophosphoryl-undecaprenol N-acetylglucosamine transferase, found in Listeria welshimeri serovar 6b (strain ATCC 35897 / DSM 20650 / CCUG 15529 / CIP 8149 / NCTC 11857 / SLCC 5334 / V8).